Here is a 416-residue protein sequence, read N- to C-terminus: Major royal jelly protein 8 (416 aa).

A signal peptide spans 1–16 (MIRWLLLMYLGITCQG). Residues N24, N58, N93, N115, N158, N175, N196, and N215 are each glycosylated (N-linked (GlcNAc...) asparagine).

Belongs to the major royal jelly protein family. Expressed at very low levels in the hypopharyngeal glands of worker honey bees (at protein level). Secreted into bee venom in the sting apparatus (at protein level). Expressed in the spermatheca of adult queen bees (at protein level); expression levels are higher in mated queens than in virgin queens. Along with Mrjp9 expressed at very low levels in the head of worker bees compared to other major royal jelly proteins.

It localises to the secreted. Functionally, component of bee sting venom. Component of royal jelly, a substance produced in the hypopharyngeal gland containing proteins, free amino acids, fatty acids, sugars and other nutrients, which is fed to developing larvae by worker nurse bees; may be present only at trace levels. All larvae are fed some royal jelly (also known as worker jelly) early in their development but it forms the principal source of nutrition for larvae destined to become queen bees. Produced in the spermatheca of adult queen bees, along with other major royal jelly proteins, where it may act as a nutrient supply for sperm stored by mated queens, or be involved in energy metabolism. This is Major royal jelly protein 8 from Apis mellifera (Honeybee).